Consider the following 359-residue polypeptide: Probable cinnamyl alcohol dehydrogenase 8A (359 aa).

Cys-45 contributes to the Zn(2+) binding site. Thr-47 is an NADP(+) binding site. Zn(2+) is bound by residues His-67, Glu-68, Cys-98, Cys-101, Cys-104, Cys-112, and Cys-161. Residues Thr-165, 186 to 191 (GLGGLG), 209 to 214 (SSSPAK), Thr-249, Gly-273, and 296 to 298 (SGG) each bind NADP(+).

It belongs to the zinc-containing alcohol dehydrogenase family. In terms of assembly, homodimer. Zn(2+) serves as cofactor.

It carries out the reaction (E)-cinnamyl alcohol + NADP(+) = (E)-cinnamaldehyde + NADPH + H(+). The catalysed reaction is (E)-coniferol + NADP(+) = (E)-coniferaldehyde + NADPH + H(+). The enzyme catalyses (E)-sinapyl alcohol + NADP(+) = (E)-sinapaldehyde + NADPH + H(+). It catalyses the reaction (E)-4-coumaroyl alcohol + NADP(+) = (E)-4-coumaraldehyde + NADPH + H(+). It carries out the reaction (E)-caffeyl alcohol + NADP(+) = (E)-caffeyl aldehyde + NADPH + H(+). The protein operates within aromatic compound metabolism; phenylpropanoid biosynthesis. In terms of biological role, involved in lignin biosynthesis. Catalyzes the final step specific for the production of lignin monomers. Catalyzes the NADPH-dependent reduction of coniferaldehyde, 5-hydroxyconiferaldehyde, sinapaldehyde, 4-coumaraldehyde and caffeyl aldehyde to their respective alcohols. The polypeptide is Probable cinnamyl alcohol dehydrogenase 8A (Oryza sativa subsp. japonica (Rice)).